A 428-amino-acid chain; its full sequence is Adenylosuccinate synthetase (428 aa).

GTP-binding positions include 12-18 (GDEGKGK) and 40-42 (GHT). Residue D13 is the Proton acceptor of the active site. Mg(2+) contacts are provided by D13 and G40. Residues 13–16 (DEGK), 38–41 (NAGH), T129, R143, Q224, T239, and R303 each bind IMP. Residue H41 is the Proton donor of the active site. 299–305 (VTTGRIR) provides a ligand contact to substrate. GTP-binding positions include R305, 331 to 333 (KVD), and 410 to 412 (AYG).

Belongs to the adenylosuccinate synthetase family. In terms of assembly, homodimer. It depends on Mg(2+) as a cofactor.

It is found in the cytoplasm. It catalyses the reaction IMP + L-aspartate + GTP = N(6)-(1,2-dicarboxyethyl)-AMP + GDP + phosphate + 2 H(+). The protein operates within purine metabolism; AMP biosynthesis via de novo pathway; AMP from IMP: step 1/2. Its function is as follows. Plays an important role in the de novo pathway of purine nucleotide biosynthesis. Catalyzes the first committed step in the biosynthesis of AMP from IMP. In Francisella tularensis subsp. holarctica (strain FTNF002-00 / FTA), this protein is Adenylosuccinate synthetase.